The primary structure comprises 262 residues: uncharacterized protein (262 aa).

This sequence belongs to the AB hydrolase superfamily. AB hydrolase 2 family.

This is an uncharacterized protein from Mycosarcoma maydis (Corn smut fungus).